Here is a 2365-residue protein sequence, read N- to C-terminus: Voltage-dependent T-type calcium channel subunit alpha-1H (2365 aa).

A disordered region spans residues 1–63 (MTEGTLAADE…PGTECGADLG (63 aa)). Topologically, residues 1 to 100 (MTEGTLAADE…SWCLRLVSRR (100 aa)) are cytoplasmic. Positions 16–36 (GASPSAPAAPVRASPASPGVP) are enriched in low complexity. The stretch at 87–422 (TRPRSWCLRL…LCLVVIATQF (336 aa)) is one I repeat. The helical transmembrane segment at 101–119 (WFEHISMLVIMLNCVTLGM) threads the bilayer. At 120 to 141 (FRPCEDVECRSERCSILEAFDD) the chain is on the extracellular side. Aspartate 140 serves as a coordination point for Zn(2+). The helical transmembrane segment at 142 to 160 (FIFAFFAVEMVIKMVALGL) threads the bilayer. Topologically, residues 161 to 169 (FGQKCYLGD) are cytoplasmic. A helical transmembrane segment spans residues 170–184 (TWNRLDFFIVMAGMM). Topologically, residues 185–193 (EYSLDGHNV) are extracellular. Zn(2+)-binding residues include aspartate 189 and histidine 191. N-linked (GlcNAc...) asparagine glycosylation is present at asparagine 192. A helical transmembrane segment spans residues 194 to 212 (SLSAIRTVRVLRPLRAINR). The Cytoplasmic portion of the chain corresponds to 213–232 (VPSMRILVTLLLDTLPMLGN). Residues 233 to 253 (VLLLCFFVFFIFGIVGVQLWA) form a helical membrane-spanning segment. Topologically, residues 254 to 394 (GLLRNRCFLD…YYVMDAHSFY (141 aa)) are extracellular. N-linked (GlcNAc...) asparagine glycosylation occurs at asparagine 271. A helical membrane pass occupies residues 395–419 (NFIYFILLIIVGSFFMINLCLVVIA). At 420–790 (TQFSETKQRE…SKLRRIVDSK (371 aa)) the chain is on the cytoplasmic side. 3 disordered regions span residues 490-573 (VDPS…SESV), 618-656 (PSGAVNSKGSTSSRPKGLRSAGTPGATAHSPLSLGSPSP), and 737-761 (GDCRDPVQQPHEGGTPGHGNERWRP). Over residues 500–532 (GPRRRPRRAGRRTASVHHLVYHHHHHHHHHYHF) the composition is skewed to basic residues. The span at 557–566 (PPSPPSPGHG) shows a compositional bias: pro residues. Residues 621–631 (AVNSKGSTSSR) show a composition bias toward polar residues. The stretch at 776–1015 (WASFSSKLRR…LLVAILVEGF (240 aa)) is one II repeat. Residues 791–811 (YFNRGIMAAILVNTLSMGVEY) form a helical membrane-spanning segment. At 812 to 824 (HEQPDELTNALEI) the chain is on the extracellular side. Residues 825-846 (SNIVFTSMFALEMLLKLLACGP) traverse the membrane as a helical segment. The Cytoplasmic portion of the chain corresponds to 847-852 (LGYIRN). Residues 853 to 871 (PYNIFDGIVVIISVWEIVG) traverse the membrane as a helical segment. Topologically, residues 872-879 (QADGGLSV) are extracellular. The helical transmembrane segment at 880 to 903 (LRTFRLLRVLKLVRFLPALRRQLV) threads the bilayer. Over 904–914 (VLMRTMDNVAT) the chain is Cytoplasmic. The helical transmembrane segment at 915–935 (FCMLLMLFIFIFSILGMHLFG) threads the bilayer. Residues 936–987 (CKFSLKTDSGDTVPDRKNFDSLLWAIVTVFQILTQEDWNVVLYNGMASTSSW) lie on the Extracellular side of the membrane. The chain crosses the membrane as a helical span at residues 988-1012 (AALYFVALMTFGNYVLFNLLVAILV). Residues 1013 to 1301 (EGFQAEGDAT…NRLRVSCQKV (289 aa)) lie on the Cytoplasmic side of the membrane. Residues 1059–1215 (PNGHLEGRGS…HRSTMDLCPP (157 aa)) are disordered. A compositionally biased stretch (low complexity) spans 1130-1147 (GPNSAGSSRRSSWNSLGR). The segment covering 1199 to 1209 (RRAESLGHRST) has biased composition (basic and acidic residues). The stretch at 1292–1569 (NRLRVSCQKV…MFVGVVVENF (278 aa)) is one III repeat. A helical transmembrane segment spans residues 1302–1324 (IAHKMFDHVVLVFIFLNCITIAL). The Extracellular segment spans residues 1325–1342 (ERPDIDPGSTERAFLSVS). The chain crosses the membrane as a helical span at residues 1343–1363 (NYIFTAIFVVEMMVKVVALGL). Residues 1364 to 1373 (LWGEHAYLQS) lie on the Cytoplasmic side of the membrane. A helical membrane pass occupies residues 1374–1393 (SWNVLDGLLVLVSLVDIIVA). Residues 1394–1407 (VASAGGAKILGVLR) lie on the Extracellular side of the membrane. The chain crosses the membrane as a helical span at residues 1408 to 1429 (VLRLLRTLRPLRVISRAPGLKL). At 1430 to 1439 (VVETLISSLR) the chain is on the cytoplasmic side. Residues 1440–1463 (PIGNIVLICCAFFIIFGILGVQLF) form a helical membrane-spanning segment. Residues 1464–1540 (KGKFYYCEGT…DQQPVQNHNP (77 aa)) are Extracellular-facing. Asparagine 1477 carries N-linked (GlcNAc...) asparagine glycosylation. Residues 1541-1566 (WMLLYFISFLLIVSFFVLNMFVGVVV) traverse the membrane as a helical segment. The Cytoplasmic segment spans residues 1567–1627 (ENFHKCRQHQ…RRSIHSLCTS (61 aa)). The stretch at 1613–1874 (DYSHTRRSIH…VVVAVLMKHL (262 aa)) is one IV repeat. Residues 1628-1648 (HYLDLFITFIICLNVITMSME) form a helical membrane-spanning segment. The Extracellular segment spans residues 1649–1662 (HYNQPKSLDEALKY). Residues 1663-1684 (CNYVFTIVFVFEAALKLVAFGF) form a helical membrane-spanning segment. At 1685–1691 (RRFFKDR) the chain is on the cytoplasmic side. The helical transmembrane segment at 1692 to 1710 (WNQLDLAIVLLSIMGIALE) threads the bilayer. Residues 1711–1724 (EIEMNAALPINPTI) lie on the Extracellular side of the membrane. The helical transmembrane segment at 1725–1748 (IRIMRVLRIARVLKLLKMATGMRA) threads the bilayer. The Cytoplasmic portion of the chain corresponds to 1749 to 1762 (LLDTVVQALPQVGN). The chain crosses the membrane as a helical span at residues 1763-1783 (LGLLFMLLFFIYAALGVELFG). Over 1784-1846 (RLECSEDNPC…KHCLSYLPAL (63 aa)) the chain is Extracellular. Residues 1847 to 1874 (SPVYFVTFVLVAQFVLVNVVVAVLMKHL) traverse the membrane as a helical segment. The Cytoplasmic portion of the chain corresponds to 1875-2365 (EESNKEARED…APDDSGDEPV (491 aa)). Polar residues-rich tracts occupy residues 1897 to 1916 (QGSTAQPPSTAQESQGTEPD) and 1967 to 1983 (VTSAHSPSLEPRTSFQV). 4 disordered regions span residues 1897–1920 (QGSTAQPPSTAQESQGTEPDTPNL), 1967–1999 (VTSAHSPSLEPRTSFQVPSAASSPARVSDPLCA), 2053–2264 (APLG…GERW), and 2321–2365 (ELSM…DEPV). The segment covering 2092 to 2102 (DDAEAADPADE) has biased composition (acidic residues). Residues 2172–2187 (GDGHLESGEVRARASE) are compositionally biased toward basic and acidic residues.

The protein belongs to the calcium channel alpha-1 subunit (TC 1.A.1.11) family. CACNA1H subfamily. In terms of assembly, interacts (via N-terminal cytoplasmic domain) with STAC. Post-translationally, in response to raising of intracellular calcium, the T-type channels are activated by CaM-kinase II. In terms of tissue distribution, is highly expressed in lumbosacral and thoracolumbar dorsal root ganglion neurons.

It localises to the cell membrane. It catalyses the reaction Ca(2+)(in) = Ca(2+)(out). Voltage-sensitive calcium channel that gives rise to T-type calcium currents. T-type calcium channels belong to the 'low-voltage activated (LVA)' group. A particularity of this type of channel is an opening at quite negative potentials, and a voltage-dependent inactivation. T-type channels serve pacemaking functions in both central neurons and cardiac nodal cells and support calcium signaling in secretory cells and vascular smooth muscle. They may also be involved in the modulation of firing patterns of neurons. In the adrenal zona glomerulosa, participates in the signaling pathway leading to aldosterone production in response to either AGT/angiotensin II, or hyperkalemia. In Mus musculus (Mouse), this protein is Voltage-dependent T-type calcium channel subunit alpha-1H (Cacna1h).